An 87-amino-acid chain; its full sequence is Small ribosomal subunit protein uS15c (87 aa).

This sequence belongs to the universal ribosomal protein uS15 family. In terms of assembly, part of the 30S ribosomal subunit.

The protein localises to the plastid. The protein resides in the chloroplast. The sequence is that of Small ribosomal subunit protein uS15c (rps15) from Nicotiana tabacum (Common tobacco).